The following is a 101-amino-acid chain: NADH-quinone oxidoreductase subunit K (101 aa).

3 helical membrane-spanning segments follow: residues 4–24 (LPHY…GIFV), 30–50 (IVIL…LVAF), and 61–81 (IFAM…LAIL).

Belongs to the complex I subunit 4L family. In terms of assembly, NDH-1 is composed of 14 different subunits. Subunits NuoA, H, J, K, L, M, N constitute the membrane sector of the complex.

It is found in the cell inner membrane. It catalyses the reaction a quinone + NADH + 5 H(+)(in) = a quinol + NAD(+) + 4 H(+)(out). In terms of biological role, NDH-1 shuttles electrons from NADH, via FMN and iron-sulfur (Fe-S) centers, to quinones in the respiratory chain. The immediate electron acceptor for the enzyme in this species is believed to be ubiquinone. Couples the redox reaction to proton translocation (for every two electrons transferred, four hydrogen ions are translocated across the cytoplasmic membrane), and thus conserves the redox energy in a proton gradient. The polypeptide is NADH-quinone oxidoreductase subunit K (Caulobacter vibrioides (strain ATCC 19089 / CIP 103742 / CB 15) (Caulobacter crescentus)).